The chain runs to 227 residues: MHFPLPIKAVMIDLDGTLLDTAPDLATAANMMLKELGKAELPLETIQSYIGKGIEKLVKRSLTGDLDGEPDSDLLRRAMPLYERSYEKTLYVDTRAYPGVREGLNALRAGGFRLACVTNKAEAFTLPLLRAAELLDYFDIVVSGDSLPKKKPDPMPLLHACERFEIQPHDMLLVGDSLNDAQAARAAGSHVFCVPYGYNEGRDVYELDCDAIVPSLYEATKLIQKSS.

The active-site Nucleophile is the Asp13. Mg(2+) contacts are provided by Asp13, Asp15, and Asp176.

It belongs to the HAD-like hydrolase superfamily. CbbY/CbbZ/Gph/YieH family. The cofactor is Mg(2+).

The catalysed reaction is 2-phosphoglycolate + H2O = glycolate + phosphate. It functions in the pathway organic acid metabolism; glycolate biosynthesis; glycolate from 2-phosphoglycolate: step 1/1. Specifically catalyzes the dephosphorylation of 2-phosphoglycolate. Is involved in the dissimilation of the intracellular 2-phosphoglycolate formed during the DNA repair of 3'-phosphoglycolate ends, a major class of DNA lesions induced by oxidative stress. This is Phosphoglycolate phosphatase from Nitrosospira multiformis (strain ATCC 25196 / NCIMB 11849 / C 71).